Here is a 343-residue protein sequence, read N- to C-terminus: Tryptophan--tRNA ligase (343 aa).

Residues Q15–T17 and G24–N25 contribute to the ATP site. The short motif at P16–N25 is the 'HIGH' region element. Position 145 (D145) interacts with L-tryptophan. ATP is bound by residues G157–D159, I196, and K205–S209. The short motif at K205–S209 is the 'KMSKS' region element.

Belongs to the class-I aminoacyl-tRNA synthetase family. In terms of assembly, homodimer.

The protein resides in the cytoplasm. The catalysed reaction is tRNA(Trp) + L-tryptophan + ATP = L-tryptophyl-tRNA(Trp) + AMP + diphosphate + H(+). Catalyzes the attachment of tryptophan to tRNA(Trp). The chain is Tryptophan--tRNA ligase from Mycobacterium leprae (strain TN).